The chain runs to 186 residues: Small ribosomal subunit protein uS7 (186 aa).

This sequence belongs to the universal ribosomal protein uS7 family. As to quaternary structure, part of the 30S ribosomal subunit.

In terms of biological role, one of the primary rRNA binding proteins, it binds directly to 16S rRNA where it nucleates assembly of the head domain of the 30S subunit. Is located at the subunit interface close to the decoding center. This is Small ribosomal subunit protein uS7 from Methanothermobacter thermautotrophicus (strain ATCC 29096 / DSM 1053 / JCM 10044 / NBRC 100330 / Delta H) (Methanobacterium thermoautotrophicum).